We begin with the raw amino-acid sequence, 271 residues long: Bifunctional protein FolD (271 aa).

NADP(+) contacts are provided by residues 154-156 (GRS), Thr-181, and Ile-222.

The protein belongs to the tetrahydrofolate dehydrogenase/cyclohydrolase family. In terms of assembly, homodimer.

It carries out the reaction (6R)-5,10-methylene-5,6,7,8-tetrahydrofolate + NADP(+) = (6R)-5,10-methenyltetrahydrofolate + NADPH. It catalyses the reaction (6R)-5,10-methenyltetrahydrofolate + H2O = (6R)-10-formyltetrahydrofolate + H(+). It participates in one-carbon metabolism; tetrahydrofolate interconversion. Functionally, catalyzes the oxidation of 5,10-methylenetetrahydrofolate to 5,10-methenyltetrahydrofolate and then the hydrolysis of 5,10-methenyltetrahydrofolate to 10-formyltetrahydrofolate. The protein is Bifunctional protein FolD of Thermosipho melanesiensis (strain DSM 12029 / CIP 104789 / BI429).